Reading from the N-terminus, the 169-residue chain is Small ribosomal subunit protein uS5 (169 aa).

Residues 15–79 (LKDQVVAINR…ESAKKNLVKV (65 aa)) enclose the S5 DRBM domain.

This sequence belongs to the universal ribosomal protein uS5 family. In terms of assembly, part of the 30S ribosomal subunit. Contacts proteins S4 and S8.

Functionally, with S4 and S12 plays an important role in translational accuracy. In terms of biological role, located at the back of the 30S subunit body where it stabilizes the conformation of the head with respect to the body. The chain is Small ribosomal subunit protein uS5 from Koribacter versatilis (strain Ellin345).